A 409-amino-acid polypeptide reads, in one-letter code: Glycinol 4-dimethylallyltransferase (409 aa).

The N-terminal 44 residues, 1–44 (MDWGLAISSHPKPYSVTTGGNLWRSKHTTKNIYFASSWISKASR), are a transit peptide targeting the chloroplast. A run of 9 helical transmembrane segments spans residues 113-133 (LSAF…LCAF), 148-168 (LSFL…EIYL), 200-220 (VIIS…TGSW), 222-242 (LICN…DVPL), 249-269 (PFVA…ISYF), 287-307 (LGFL…SKDI), 330-350 (AFWI…LAGA), 354-374 (HFWT…ILWY), and 388-408 (GSFY…MALI).

Belongs to the UbiA prenyltransferase family. Mg(2+) is required as a cofactor. Requires Mn(2+) as cofactor. The cofactor is Co(2+).

Its subcellular location is the plastid. The protein resides in the chloroplast membrane. It carries out the reaction (6aS,11aS)-3,6a,9-trihydroxypterocarpan + dimethylallyl diphosphate = (6aS,11aS)-2-dimethylallyl-3,6a,9-trihydroxypterocarpan + diphosphate. The enzyme catalyses (6aS,11aS)-3,6a,9-trihydroxypterocarpan + dimethylallyl diphosphate = (6aS,11aS)-4-dimethylallyl-3,6a,9-trihydroxypterocarpan + diphosphate. It participates in phytoalexin biosynthesis; pterocarpan phytoalexin biosynthesis. Functionally, proposed to be involved in the biosynthesis of pterocarpan phytoalexins, specifically glyceollins. Can act as a prenyltransferase towards glycinol which is the direct precursor of glyceollins. Seems to be specific for prenylation at C-4 thus producing glyceollin I. This chain is Glycinol 4-dimethylallyltransferase (G4DT), found in Glycine max (Soybean).